A 103-amino-acid chain; its full sequence is Large ribosomal subunit protein bL21 (103 aa).

This sequence belongs to the bacterial ribosomal protein bL21 family. Part of the 50S ribosomal subunit. Contacts protein L20.

In terms of biological role, this protein binds to 23S rRNA in the presence of protein L20. The protein is Large ribosomal subunit protein bL21 of Acetivibrio thermocellus (strain ATCC 27405 / DSM 1237 / JCM 9322 / NBRC 103400 / NCIMB 10682 / NRRL B-4536 / VPI 7372) (Clostridium thermocellum).